Here is a 209-residue protein sequence, read N- to C-terminus: Uracil phosphoribosyltransferase (209 aa).

Residues Arg79, Arg104, and 131 to 139 (DPMLATGGS) contribute to the 5-phospho-alpha-D-ribose 1-diphosphate site. Uracil is bound by residues Val194 and 199 to 201 (GDA). 5-phospho-alpha-D-ribose 1-diphosphate is bound at residue Asp200.

It belongs to the UPRTase family. Requires Mg(2+) as cofactor.

The enzyme catalyses UMP + diphosphate = 5-phospho-alpha-D-ribose 1-diphosphate + uracil. It functions in the pathway pyrimidine metabolism; UMP biosynthesis via salvage pathway; UMP from uracil: step 1/1. With respect to regulation, allosterically activated by GTP. In terms of biological role, catalyzes the conversion of uracil and 5-phospho-alpha-D-ribose 1-diphosphate (PRPP) to UMP and diphosphate. This is Uracil phosphoribosyltransferase from Clostridium botulinum (strain ATCC 19397 / Type A).